A 262-amino-acid chain; its full sequence is Flap endonuclease Xni (262 aa).

Residue aspartate 112 coordinates Mg(2+). Residues 171-258 enclose the 5'-3' exonuclease domain; it reads QQLNDYWAIT…GFNLKDLRYT (88 aa). Isoleucine 179, valine 190, and isoleucine 193 together coordinate K(+). The tract at residues 192-197 is interaction with DNA; it reads GIGSKG.

Belongs to the Xni family. Mg(2+) serves as cofactor. K(+) is required as a cofactor.

Functionally, has flap endonuclease activity. During DNA replication, flap endonucleases cleave the 5'-overhanging flap structure that is generated by displacement synthesis when DNA polymerase encounters the 5'-end of a downstream Okazaki fragment. This chain is Flap endonuclease Xni, found in Psychromonas ingrahamii (strain DSM 17664 / CCUG 51855 / 37).